We begin with the raw amino-acid sequence, 405 residues long: tRNA (uracil(54)-C(5))-methyltransferase (405 aa).

[4Fe-4S] cluster contacts are provided by Cys61, Cys67, Cys70, and Cys137. Residues Gln252, Tyr278, Thr283, 299–300 (DS), Asp326, and Asp340 each bind S-adenosyl-L-methionine. The Nucleophile role is filled by Cys367. Residue Glu399 is the Proton acceptor of the active site.

It belongs to the class I-like SAM-binding methyltransferase superfamily. RNA M5U methyltransferase family.

It carries out the reaction uridine(54) in tRNA + S-adenosyl-L-methionine = 5-methyluridine(54) in tRNA + S-adenosyl-L-homocysteine + H(+). Activated by magnesium ions. In terms of biological role, catalyzes the formation of 5-methyl-uridine at position 54 (m5U54) in tRNA. In Pyrococcus abyssi (strain GE5 / Orsay), this protein is tRNA (uracil(54)-C(5))-methyltransferase.